Here is a 557-residue protein sequence, read N- to C-terminus: MAAQGFLLIATFLLVLMVLARPLGSGLAWLINDIPLPGTTGVERVLFSALGVSNHEMNWKQYLCAILGLNMLGLAVLFFMLLGQHYLPLNPQQLPGLSWDLALNTAVSFVTNTNWQSYSGETTLSYFSQMAGLTVQNFLSAASGIAVIFALIRAFTRQSMSTLGNAWVDLLRITLWVLVPVALVIALFFIQQGALQNFLPYQAVNTVEGAQQLLPMGPVASQEAIKMLGTNGGGFFNANSSHPFENPTALTNFVQMLAIFLIPTALCFAFGEVTGDRRQGRMLLWAMSVIFVICVGVVMWAEVQGNPHLLALGADSSINMEGKESRFGVLVSSLFAVVTTAASCGAVIAMHDSFTALGGMVPMWLMQIGEVVFGGVGSGLYGMMLFVLLAVFIAGLMIGRTPEYLGKKIDVREMKLTALAILVTPTLVLMGAALAMMTDAGRSAMLNPGPHGFSEVLYAVSSAANNNGSAFAGLSANSPFWNCLLAFCMFVGRFGVIIPVMAIAGSLVSKKSQPASSGTLPTHGPLFVGLLIGTVLLVGALTFIPALALGPVAEYLS.

The next 12 membrane-spanning stretches (helical) occupy residues 5 to 25 (GFLLIATFLLVLMVLARPLGS), 63 to 83 (LCAILGLNMLGLAVLFFMLLG), 132 to 152 (GLTVQNFLSAASGIAVIFALI), 170 to 190 (LLRITLWVLVPVALVIALFFI), 253 to 273 (FVQMLAIFLIPTALCFAFGEV), 283 to 303 (LLWAMSVIFVICVGVVMWAEV), 329 to 349 (VLVSSLFAVVTTAASCGAVIA), 356 to 376 (ALGGMVPMWLMQIGEVVFGGV), 379 to 399 (GLYGMMLFVLLAVFIAGLMIG), 416 to 436 (LTALAILVTPTLVLMGAALAM), 484 to 504 (LLAFCMFVGRFGVIIPVMAIA), and 526 to 546 (LFVGLLIGTVLLVGALTFIPA).

The protein belongs to the KdpA family. In terms of assembly, the system is composed of three essential subunits: KdpA, KdpB and KdpC.

The protein localises to the cell inner membrane. In terms of biological role, part of the high-affinity ATP-driven potassium transport (or Kdp) system, which catalyzes the hydrolysis of ATP coupled with the electrogenic transport of potassium into the cytoplasm. This subunit binds the periplasmic potassium ions and delivers the ions to the membrane domain of KdpB through an intramembrane tunnel. This chain is Potassium-transporting ATPase potassium-binding subunit, found in Escherichia coli O157:H7.